The chain runs to 626 residues: UvrABC system protein C (626 aa).

Positions 25–104 (TSPGVYRFSN…IKELKPRYNV (80 aa)) constitute a GIY-YIG domain. The UVR domain maps to 218-253 (SALLRDLSAEMQKKAKELKFEEAAALKAQIEGLKRY).

It belongs to the UvrC family. In terms of assembly, interacts with UvrB in an incision complex.

It is found in the cytoplasm. Functionally, the UvrABC repair system catalyzes the recognition and processing of DNA lesions. UvrC both incises the 5' and 3' sides of the lesion. The N-terminal half is responsible for the 3' incision and the C-terminal half is responsible for the 5' incision. The polypeptide is UvrABC system protein C (Chlorobaculum tepidum (strain ATCC 49652 / DSM 12025 / NBRC 103806 / TLS) (Chlorobium tepidum)).